The chain runs to 311 residues: Malate dehydrogenase (311 aa).

Residues 7–13 (GAAGGIG) and aspartate 34 contribute to the NAD(+) site. The substrate site is built by arginine 81 and arginine 87. Residues asparagine 94 and 117 to 119 (ITN) contribute to the NAD(+) site. Residues asparagine 119 and arginine 153 each coordinate substrate. Catalysis depends on histidine 177, which acts as the Proton acceptor. Methionine 227 serves as a coordination point for NAD(+).

Belongs to the LDH/MDH superfamily. MDH type 1 family. Homodimer.

The enzyme catalyses (S)-malate + NAD(+) = oxaloacetate + NADH + H(+). Catalyzes the reversible oxidation of malate to oxaloacetate. The protein is Malate dehydrogenase of Vibrio campbellii (strain ATCC BAA-1116).